Reading from the N-terminus, the 149-residue chain is Pleckstrin homology domain-containing family J member 1 (149 aa).

In terms of domain architecture, PH spans 15 to 108 (PAEMAAELGM…WMEALRRASY (94 aa)).

Expressed in testis and liver.

This Homo sapiens (Human) protein is Pleckstrin homology domain-containing family J member 1 (PLEKHJ1).